We begin with the raw amino-acid sequence, 562 residues long: Zinc finger protein 579 (562 aa).

The span at 1–11 (MDPQPPPPAQG) shows a compositional bias: pro residues. The interval 1 to 45 (MDPQPPPPAQGSPPHRDRGRGRGRGRGRGRGRGRGRGGAGAPRAP) is disordered. Basic residues predominate over residues 17–35 (DRGRGRGRGRGRGRGRGRG). 3 consecutive C2H2-type zinc fingers follow at residues 46-68 (LPCP…RLSH), 74-96 (HACP…LRGH), and 102-125 (LRCA…AQEH). Arginine 94 is modified (omega-N-methylarginine). Disordered stretches follow at residues 120–154 (HLAQ…EGVE) and 166–199 (EEAT…AEAG). A compositionally biased stretch (basic and acidic residues) spans 187-197 (DPRESEAKEAE). Serine 191 is modified (phosphoserine). C2H2-type zinc fingers lie at residues 267-289 (HQCS…RLVH) and 295-317 (FVCP…RRVH). A disordered region spans residues 321–377 (SLLAPLPGAGKKDDKASGGRNSGKGPEGGEGAECGGASEGGEGGHNGGDATPARPPA). Residues 340-367 (RNSGKGPEGGEGAECGGASEGGEGGHNG) show a composition bias toward gly residues. C2H2-type zinc fingers lie at residues 382–404 (FWCP…GVTH), 410–432 (FQCV…AQVH), and 439–461 (HPCP…QRCH). At serine 486 the chain carries Phosphoserine. The disordered stretch occupies residues 505–530 (AHIKEEPPSPGTPPQSPPAPPVFLSA). Positions 512-525 (PSPGTPPQSPPAPP) are enriched in pro residues.

It belongs to the krueppel C2H2-type zinc-finger protein family.

Its subcellular location is the nucleus. May be involved in transcriptional regulation. The sequence is that of Zinc finger protein 579 (Znf579) from Mus musculus (Mouse).